The sequence spans 706 residues: Catalase HPII (706 aa).

Residues His77 and Asn151 contribute to the active site. Tyr365 lines the heme pocket. A disordered region spans residues Glu512 to Thr532.

It belongs to the catalase family. HPII subfamily. Heme is required as a cofactor.

The protein resides in the cytoplasm. It carries out the reaction 2 H2O2 = O2 + 2 H2O. Its function is as follows. Decomposes hydrogen peroxide into water and oxygen; serves to protect cells from the toxic effects of hydrogen peroxide. The chain is Catalase HPII (katE) from Mycobacterium avium.